The sequence spans 464 residues: Ribosomal protein uS12 methylthiotransferase RimO (464 aa).

An MTTase N-terminal domain is found at 14 to 125; sequence PTVAFAHLGC…IVEVLQRVEA (112 aa). Cysteine 23, cysteine 59, cysteine 88, cysteine 163, cysteine 167, and cysteine 170 together coordinate [4Fe-4S] cluster. The Radical SAM core domain occupies 149 to 378; the sequence is TTDQAVAFLK…MALQQPISAE (230 aa). Residues 381–452 enclose the TRAM domain; the sequence is HSWVSRTVDV…VYDLSGRIVG (72 aa).

Belongs to the methylthiotransferase family. RimO subfamily. Requires [4Fe-4S] cluster as cofactor.

It localises to the cytoplasm. It carries out the reaction L-aspartate(89)-[ribosomal protein uS12]-hydrogen + (sulfur carrier)-SH + AH2 + 2 S-adenosyl-L-methionine = 3-methylsulfanyl-L-aspartate(89)-[ribosomal protein uS12]-hydrogen + (sulfur carrier)-H + 5'-deoxyadenosine + L-methionine + A + S-adenosyl-L-homocysteine + 2 H(+). Catalyzes the methylthiolation of an aspartic acid residue of ribosomal protein uS12. This Parasynechococcus marenigrum (strain WH8102) protein is Ribosomal protein uS12 methylthiotransferase RimO.